We begin with the raw amino-acid sequence, 688 residues long: DNA-directed RNA polymerase subunit beta' (688 aa).

Residues Cys-69, Cys-71, Cys-87, and Cys-90 each coordinate Zn(2+). Residues Asp-493, Asp-495, and Asp-497 each contribute to the Mg(2+) site.

The protein belongs to the RNA polymerase beta' chain family. RpoC1 subfamily. As to quaternary structure, in plastids the minimal PEP RNA polymerase catalytic core is composed of four subunits: alpha, beta, beta', and beta''. When a (nuclear-encoded) sigma factor is associated with the core the holoenzyme is formed, which can initiate transcription. Requires Mg(2+) as cofactor. The cofactor is Zn(2+).

It localises to the plastid. The protein localises to the chloroplast. The enzyme catalyses RNA(n) + a ribonucleoside 5'-triphosphate = RNA(n+1) + diphosphate. In terms of biological role, DNA-dependent RNA polymerase catalyzes the transcription of DNA into RNA using the four ribonucleoside triphosphates as substrates. This Chloranthus spicatus (Chulantree) protein is DNA-directed RNA polymerase subunit beta'.